Reading from the N-terminus, the 165-residue chain is Destrin (165 aa).

An N-acetylalanine modification is found at Ala2. Ser3 carries the phosphoserine modification. The region spanning 4–153 is the ADF-H domain; sequence GVQVADEVCR…NRTCIAEKLG (150 aa). Lys19 carries the N6-acetyllysine modification. The Nuclear localization signal motif lies at 30–34; that stretch reads KKRKK.

This sequence belongs to the actin-binding proteins ADF family. Post-translationally, ISGylated. In terms of tissue distribution, widely expressed. Not found in skeletal muscle.

In terms of biological role, actin-depolymerizing protein. Severs actin filaments (F-actin) and binds to actin monomers (G-actin). Acts in a pH-independent manner. This chain is Destrin (Dstn), found in Mus musculus (Mouse).